A 487-amino-acid chain; its full sequence is Cobyric acid synthase (487 aa).

In terms of domain architecture, GATase cobBQ-type spans 249–435; the sequence is GIDIAIVRLP…IHGIFDEGDF (187 aa). Catalysis depends on Cys-330, which acts as the Nucleophile. His-427 is a catalytic residue.

The protein belongs to the CobB/CobQ family. CobQ subfamily.

It functions in the pathway cofactor biosynthesis; adenosylcobalamin biosynthesis. Functionally, catalyzes amidations at positions B, D, E, and G on adenosylcobyrinic A,C-diamide. NH(2) groups are provided by glutamine, and one molecule of ATP is hydrogenolyzed for each amidation. This chain is Cobyric acid synthase, found in Clostridium perfringens (strain ATCC 13124 / DSM 756 / JCM 1290 / NCIMB 6125 / NCTC 8237 / Type A).